A 142-amino-acid chain; its full sequence is Large ribosomal subunit protein uL11 (142 aa).

The protein belongs to the universal ribosomal protein uL11 family. As to quaternary structure, part of the ribosomal stalk of the 50S ribosomal subunit. Interacts with L10 and the large rRNA to form the base of the stalk. L10 forms an elongated spine to which L12 dimers bind in a sequential fashion forming a multimeric L10(L12)X complex. One or more lysine residues are methylated.

In terms of biological role, forms part of the ribosomal stalk which helps the ribosome interact with GTP-bound translation factors. The sequence is that of Large ribosomal subunit protein uL11 from Vibrio vulnificus (strain YJ016).